The chain runs to 234 residues: Proteasome subunit beta (234 aa).

A disordered region spans residues 1-35 (MNPDLNMNPHDSGRTDPYAPELGEIATDEGDGENV). Positions 1 to 39 (MNPDLNMNPHDSGRTDPYAPELGEIATDEGDGENVTKTG) are cleaved as a propeptide — removed in mature form; by autocatalysis. T40 acts as the Nucleophile in catalysis.

It belongs to the peptidase T1B family. In terms of assembly, the 20S proteasome core is composed of 14 alpha and 14 beta subunits that assemble into four stacked heptameric rings, resulting in a barrel-shaped structure. The two inner rings, each composed of seven catalytic beta subunits, are sandwiched by two outer rings, each composed of seven alpha subunits. The catalytic chamber with the active sites is on the inside of the barrel. Has a gated structure, the ends of the cylinder being occluded by the N-termini of the alpha-subunits. Is capped at one or both ends by the proteasome regulatory ATPase, PAN.

Its subcellular location is the cytoplasm. The catalysed reaction is Cleavage of peptide bonds with very broad specificity.. With respect to regulation, the formation of the proteasomal ATPase PAN-20S proteasome complex, via the docking of the C-termini of PAN into the intersubunit pockets in the alpha-rings, triggers opening of the gate for substrate entry. Interconversion between the open-gate and close-gate conformations leads to a dynamic regulation of the 20S proteasome proteolysis activity. Its function is as follows. Component of the proteasome core, a large protease complex with broad specificity involved in protein degradation. The polypeptide is Proteasome subunit beta (Halorhabdus utahensis (strain DSM 12940 / JCM 11049 / AX-2)).